Consider the following 535-residue polypeptide: T-complex protein 1 subunit epsilon (535 aa).

Belongs to the TCP-1 chaperonin family. In terms of assembly, heterooligomeric complex of about 850 to 900 kDa that forms two stacked rings, 12 to 16 nm in diameter.

Its subcellular location is the cytoplasm. Functionally, molecular chaperone; assists the folding of proteins upon ATP hydrolysis. Known to play a role, in vitro, in the folding of actin and tubulin. The polypeptide is T-complex protein 1 subunit epsilon (Avena sativa (Oat)).